Consider the following 275-residue polypeptide: Exosome complex component Rrp42 (275 aa).

This sequence belongs to the RNase PH family. Rrp42 subfamily. Component of the archaeal exosome complex. Forms a hexameric ring-like arrangement composed of 3 Rrp41-Rrp42 heterodimers. The hexameric ring associates with a trimer of Rrp4 and/or Csl4 subunits.

The protein localises to the cytoplasm. Functionally, non-catalytic component of the exosome, which is a complex involved in RNA degradation. Contributes to the structuring of the Rrp41 active site. The sequence is that of Exosome complex component Rrp42 from Sulfurisphaera tokodaii (strain DSM 16993 / JCM 10545 / NBRC 100140 / 7) (Sulfolobus tokodaii).